Reading from the N-terminus, the 271-residue chain is MATYFVGDIQGCLDELLLLLERVEFNREKDQLWLTGDLVARGPKSLETLRFVKSLGNAAITILGNHDLHLLAVSQGISRVKEKDKTAPIFTAPDSEDLLTWLRHQPLLAVHSEYDIVMTHAGISPQWDMPTAIECAHEVESVLLSDKWVWLLENMYENHPDTWDVTLSGIERYRYIINAFTRMRFCHLDGRLDMECKLPPQDINNDELVPWFELENRLPLSHKVIFGHWAALMGHEGNNVIALDTGCVWGEYMTMYRIDDGKYFTQKAIEQ.

Belongs to the Ap4A hydrolase family.

It carries out the reaction P(1),P(4)-bis(5'-adenosyl) tetraphosphate + H2O = 2 ADP + 2 H(+). Hydrolyzes diadenosine 5',5'''-P1,P4-tetraphosphate to yield ADP. The sequence is that of Bis(5'-nucleosyl)-tetraphosphatase, symmetrical from Aliivibrio fischeri (strain MJ11) (Vibrio fischeri).